A 58-amino-acid chain; its full sequence is Isocitrate lyase (58 aa).

The protein belongs to the isocitrate lyase/PEP mutase superfamily. Isocitrate lyase family. As to quaternary structure, homotetramer. Mg(2+) serves as cofactor.

It is found in the glyoxysome. The enzyme catalyses D-threo-isocitrate = glyoxylate + succinate. The protein operates within carbohydrate metabolism; glyoxylate cycle; (S)-malate from isocitrate: step 1/2. In terms of biological role, involved in storage lipid mobilization during the growth of higher plant seedling. The sequence is that of Isocitrate lyase from Helianthus annuus (Common sunflower).